The following is a 231-amino-acid chain: Large ribosomal subunit protein uL1 (231 aa).

It belongs to the universal ribosomal protein uL1 family. Part of the 50S ribosomal subunit.

In terms of biological role, binds directly to 23S rRNA. The L1 stalk is quite mobile in the ribosome, and is involved in E site tRNA release. Protein L1 is also a translational repressor protein, it controls the translation of the L11 operon by binding to its mRNA. In Pseudomonas fluorescens (strain ATCC BAA-477 / NRRL B-23932 / Pf-5), this protein is Large ribosomal subunit protein uL1.